We begin with the raw amino-acid sequence, 399 residues long: uncharacterized protein (399 aa).

The Cytoplasmic segment spans residues 1 to 8 (MHNLQVRR). The chain crosses the membrane as a helical span at residues 9 to 35 (HYAALKGFYLFAFLGTGSIIPLLSMYL). The Extracellular portion of the chain corresponds to 36–42 (TKEQHLS). The helical transmembrane segment at 43–71 (GSQVGLIMSLGPIVMIFFQPFWGMLSDYT) threads the bilayer. Residues 72 to 75 (QKTK) are Cytoplasmic-facing. The chain crosses the membrane as a helical span at residues 76–101 (GLLAVCTSITGIIGLAYIAFDSFPLF). Topologically, residues 102–105 (ILIA) are extracellular. A helical transmembrane segment spans residues 106-123 (ACFAAFQSTIIPLSDSIS). The Cytoplasmic portion of the chain corresponds to 124-134 (LRYTQETNGNY). Residues 135-157 (GGIRLFGSLGFGVAVFAMGQVTN) traverse the membrane as a helical segment. The Extracellular segment spans residues 158-160 (QLY). A helical transmembrane segment spans residues 161-180 (PIHVIFIFGCAFLCIAAILA). Residues 181 to 210 (SQVPGQQKTTKVNIRKGFRELISNKTFLIF) lie on the Cytoplasmic side of the membrane. A helical transmembrane segment spans residues 211–230 (MIITFTTFAPNLANNTYFSL). Over 231 to 234 (FLDK) the chain is Extracellular. A helical transmembrane segment spans residues 235 to 259 (SGASLSAIGILFFIGVISEIPFMRF). Residues 260–269 (AQTFIDKMGL) are Cytoplasmic-facing. Residues 270 to 289 (LNVIMLSGGVSLFRWALYFT) traverse the membrane as a helical segment. Over 290–292 (APS) the chain is Extracellular. A helical membrane pass occupies residues 293-315 (LWIIYATVFLQGVAIGLFIPAAL). Topologically, residues 316–327 (QYVKKITPRHVE) are cytoplasmic. Residues 328–355 (ATALTMYAAIGNGFGNWFCTFAGGYIFD) traverse the membrane as a helical segment. Topologically, residues 356 to 358 (YVS) are extracellular. A helical transmembrane segment spans residues 359–379 (IFAVYLLFGILSIAGFGLTLY). Over 380–399 (LMKAEKNKHTLHQPAVTFKP) the chain is Cytoplasmic.

It belongs to the major facilitator superfamily.

The protein resides in the cell membrane. This is an uncharacterized protein from Bacillus subtilis (strain 168).